Reading from the N-terminus, the 340-residue chain is Uroporphyrinogen decarboxylase (340 aa).

Substrate is bound by residues 21–25 (RQAGR), Asp-71, Tyr-147, Ser-202, and His-315.

Belongs to the uroporphyrinogen decarboxylase family. As to quaternary structure, homodimer.

It is found in the cytoplasm. It carries out the reaction uroporphyrinogen III + 4 H(+) = coproporphyrinogen III + 4 CO2. Its pathway is porphyrin-containing compound metabolism; protoporphyrin-IX biosynthesis; coproporphyrinogen-III from 5-aminolevulinate: step 4/4. Its function is as follows. Catalyzes the decarboxylation of four acetate groups of uroporphyrinogen-III to yield coproporphyrinogen-III. The polypeptide is Uroporphyrinogen decarboxylase (Nautilia profundicola (strain ATCC BAA-1463 / DSM 18972 / AmH)).